The primary structure comprises 128 residues: Protein 2B* (128 aa).

Disordered stretches follow at residues 1–27 (PFMF…NPTA) and 92–128 (RDDN…RNSS). The segment covering 18–27 (SVINGSNPTA) has biased composition (polar residues). Basic and acidic residues predominate over residues 111-128 (IDGRRDYKPDKSVRRNSS).

The protein belongs to the encephalomyocarditis virus protein 2B* family.

This chain is Protein 2B*, found in Aotus trivirgatus (Three-striped night monkey).